An 85-amino-acid polypeptide reads, in one-letter code: MRTAYWVMVMMMVGITAPLSEGRKLNDAIRGLVADYLTPQLLQSLVSAPYPEFQLDDPNLEIPVCIWKVCPPIPWRRRDLKKRNK.

The first 22 residues, 1-22 (MRTAYWVMVMMMVGITAPLSEG), serve as a signal peptide directing secretion. The propeptide occupies 23–60 (RKLNDAIRGLVADYLTPQLLQSLVSAPYPEFQLDDPNL). Residues cysteine 65 and cysteine 70 are joined by a disulfide bond. The propeptide occupies 76-85 (RRRDLKKRNK).

Belongs to the conotoxin C superfamily. As to expression, expressed by the venom duct.

Its subcellular location is the secreted. Acts as an agonist of neurotensin receptors. It binds to human neurotensin type 1 receptor (NTSR1), rat neurotensin types 1 and 2 receptors (NTSR1/NTSR2) and mouse neurotensin type 3 receptor (SORT1). In Conus litteratus (Lettered cone), this protein is Contulakin-Lt1.